A 757-amino-acid polypeptide reads, in one-letter code: Lysyl oxidase homolog 4 (757 aa).

The first 25 residues, 1-25 (MWFLPAALPLLPLLLLLGQAPPSRP), serve as a signal peptide directing secretion. SRCR domains lie at 33–134 (LRLV…VVCN), 160–288 (VRLK…VSCV), 312–412 (VRLR…VRCN), and 422–530 (VRLA…VSCT). 17 cysteine pairs are disulfide-bonded: Cys59-Cys123, Cys72-Cys133, Cys103-Cys113, Cys192-Cys277, Cys205-Cys287, Cys252-Cys262, Cys337-Cys401, Cys350-Cys411, Cys381-Cys391, Cys451-Cys516, Cys464-Cys529, Cys498-Cys508, Cys559-Cys565, Cys611-Cys659, Cys643-Cys649, Cys671-Cys681, and Cys718-Cys732. Asn199 is a glycosylation site (N-linked (GlcNAc...) asparagine). The interval 534-737 (PDLVMNAQLV…WLHNCHTGDS (204 aa)) is lysyl-oxidase like. 3 residues coordinate Cu cation: His612, His614, and His616. N-linked (GlcNAc...) asparagine glycosylation occurs at Asn630. The segment at residues 639–675 (KASFCLEDTNCPTGMQRRYACANFGEQGVTVGCWDTY) is a cross-link (lysine tyrosylquinone (Lys-Tyr)). Tyr675 carries the 2',4',5'-topaquinone modification.

The protein belongs to the lysyl oxidase family. Requires Cu cation as cofactor. It depends on lysine tyrosylquinone residue as a cofactor. In terms of processing, the lysine tyrosylquinone cross-link (LTQ) is generated by condensation of the epsilon-amino group of a lysine with a topaquinone produced by oxidation of tyrosine. May be proteolytically cleaved by BMP1.

It is found in the secreted. It localises to the extracellular space. It catalyses the reaction L-lysyl-[protein] + O2 + H2O = (S)-2-amino-6-oxohexanoyl-[protein] + H2O2 + NH4(+). Functionally, catalyzes the oxidative deamination of lysine and hydroxylysine residues in collagen and elastin, resulting in the formation of covalent cross-linkages, and the stabilization of collagen and elastin fibers. The polypeptide is Lysyl oxidase homolog 4 (LOXL4) (Bos taurus (Bovine)).